A 247-amino-acid polypeptide reads, in one-letter code: Putative ankyrin repeat protein RBE_1110 (247 aa).

ANK repeat units follow at residues 105-135 (QNKD…CIDY) and 139-171 (EGHN…KLIT).

This is Putative ankyrin repeat protein RBE_1110 from Rickettsia bellii (strain RML369-C).